A 116-amino-acid polypeptide reads, in one-letter code: MKKEILEVFDNTFPGRDYTIEIVNPEFTSVCPITALPDFGTIIIRYIPDKSCVELKSLKYYFLEFRNAGIFYENITNTILDDLTSVLQPREMTVITQWKARGGITETVSVTWPQKQ.

The active-site Thioimide intermediate is the Cys-31. Asp-38 functions as the Proton donor in the catalytic mechanism. Substrate is bound by residues 53–55 (VEL) and 72–73 (YE).

The protein belongs to the GTP cyclohydrolase I family. QueF type 1 subfamily.

The protein localises to the cytoplasm. The enzyme catalyses 7-aminomethyl-7-carbaguanine + 2 NADP(+) = 7-cyano-7-deazaguanine + 2 NADPH + 3 H(+). Its pathway is tRNA modification; tRNA-queuosine biosynthesis. Catalyzes the NADPH-dependent reduction of 7-cyano-7-deazaguanine (preQ0) to 7-aminomethyl-7-deazaguanine (preQ1). The polypeptide is NADPH-dependent 7-cyano-7-deazaguanine reductase (Chlorobium phaeobacteroides (strain DSM 266 / SMG 266 / 2430)).